Reading from the N-terminus, the 179-residue chain is ATP synthase subunit delta (179 aa).

Belongs to the ATPase delta chain family. In terms of assembly, F-type ATPases have 2 components, F(1) - the catalytic core - and F(0) - the membrane proton channel. F(1) has five subunits: alpha(3), beta(3), gamma(1), delta(1), epsilon(1). F(0) has three main subunits: a(1), b(2) and c(10-14). The alpha and beta chains form an alternating ring which encloses part of the gamma chain. F(1) is attached to F(0) by a central stalk formed by the gamma and epsilon chains, while a peripheral stalk is formed by the delta and b chains.

The protein resides in the cell inner membrane. F(1)F(0) ATP synthase produces ATP from ADP in the presence of a proton or sodium gradient. F-type ATPases consist of two structural domains, F(1) containing the extramembraneous catalytic core and F(0) containing the membrane proton channel, linked together by a central stalk and a peripheral stalk. During catalysis, ATP synthesis in the catalytic domain of F(1) is coupled via a rotary mechanism of the central stalk subunits to proton translocation. Functionally, this protein is part of the stalk that links CF(0) to CF(1). It either transmits conformational changes from CF(0) to CF(1) or is implicated in proton conduction. The chain is ATP synthase subunit delta from Alkalilimnicola ehrlichii (strain ATCC BAA-1101 / DSM 17681 / MLHE-1).